Consider the following 295-residue polypeptide: Protein SSO2 (295 aa).

Topologically, residues 1-269 (MSNANPYENN…ARKARKNKIR (269 aa)) are cytoplasmic. 2 positions are modified to phosphoserine: S31 and S34. Residues 39–100 (AFMNKINSIN…ATDLQYQLKA (62 aa)) are a coiled coil. The t-SNARE coiled-coil homology domain maps to 194 to 256 (LAEVQARHQE…EQGVGHTNKA (63 aa)). The chain crosses the membrane as a helical; Anchor for type IV membrane protein span at residues 270–291 (CLIICFIIFAIVVVVVVVPSVV). Over 292-295 (ETRK) the chain is Extracellular.

The protein belongs to the syntaxin family.

It localises to the membrane. Its function is as follows. Required for vesicle fusion with the plasma membrane. The sequence is that of Protein SSO2 (SSO2) from Saccharomyces cerevisiae (strain ATCC 204508 / S288c) (Baker's yeast).